Here is a 225-residue protein sequence, read N- to C-terminus: Ribonuclease HII (225 aa).

The RNase H type-2 domain maps to 35–225; the sequence is GLVAGVDEVG…SFRPCQISPD (191 aa). A divalent metal cation contacts are provided by aspartate 41, glutamate 42, and aspartate 137.

This sequence belongs to the RNase HII family. Mn(2+) is required as a cofactor. The cofactor is Mg(2+).

It is found in the cytoplasm. The catalysed reaction is Endonucleolytic cleavage to 5'-phosphomonoester.. Its function is as follows. Endonuclease that specifically degrades the RNA of RNA-DNA hybrids. This chain is Ribonuclease HII, found in Nostoc sp. (strain PCC 7120 / SAG 25.82 / UTEX 2576).